We begin with the raw amino-acid sequence, 147 residues long: D-aminoacyl-tRNA deacylase (147 aa).

Positions 136–137 (GP) match the Gly-cisPro motif, important for rejection of L-amino acids motif.

It belongs to the DTD family. In terms of assembly, homodimer.

It localises to the cytoplasm. It carries out the reaction glycyl-tRNA(Ala) + H2O = tRNA(Ala) + glycine + H(+). It catalyses the reaction a D-aminoacyl-tRNA + H2O = a tRNA + a D-alpha-amino acid + H(+). Functionally, an aminoacyl-tRNA editing enzyme that deacylates mischarged D-aminoacyl-tRNAs. Also deacylates mischarged glycyl-tRNA(Ala), protecting cells against glycine mischarging by AlaRS. Acts via tRNA-based rather than protein-based catalysis; rejects L-amino acids rather than detecting D-amino acids in the active site. By recycling D-aminoacyl-tRNA to D-amino acids and free tRNA molecules, this enzyme counteracts the toxicity associated with the formation of D-aminoacyl-tRNA entities in vivo and helps enforce protein L-homochirality. The polypeptide is D-aminoacyl-tRNA deacylase (Persephonella marina (strain DSM 14350 / EX-H1)).